Consider the following 116-residue polypeptide: NADH-ubiquinone oxidoreductase chain 3 (116 aa).

A run of 3 helical transmembrane segments spans residues 8 to 28 (VVAT…LPSL), 56 to 76 (FFLI…LLPL), and 88 to 108 (TLLW…YEWF).

This sequence belongs to the complex I subunit 3 family.

The protein resides in the mitochondrion membrane. It catalyses the reaction a ubiquinone + NADH + 5 H(+)(in) = a ubiquinol + NAD(+) + 4 H(+)(out). In terms of biological role, core subunit of the mitochondrial membrane respiratory chain NADH dehydrogenase (Complex I) that is believed to belong to the minimal assembly required for catalysis. Complex I functions in the transfer of electrons from NADH to the respiratory chain. The immediate electron acceptor for the enzyme is believed to be ubiquinone. The sequence is that of NADH-ubiquinone oxidoreductase chain 3 (MT-ND3) from Scyliorhinus canicula (Small-spotted catshark).